A 1035-amino-acid chain; its full sequence is Isoleucine--tRNA ligase (1035 aa).

The short motif at 48–58 is the 'HIGH' region element; that stretch reads PTANGRPHVGH. A 'KMSKS' region motif is present at residues 589-593; it reads KMSKH. An ATP-binding site is contributed by Lys-592.

This sequence belongs to the class-I aminoacyl-tRNA synthetase family. IleS type 2 subfamily. Monomer. Zn(2+) is required as a cofactor.

Its subcellular location is the cytoplasm. It carries out the reaction tRNA(Ile) + L-isoleucine + ATP = L-isoleucyl-tRNA(Ile) + AMP + diphosphate. In terms of biological role, catalyzes the attachment of isoleucine to tRNA(Ile). As IleRS can inadvertently accommodate and process structurally similar amino acids such as valine, to avoid such errors it has two additional distinct tRNA(Ile)-dependent editing activities. One activity is designated as 'pretransfer' editing and involves the hydrolysis of activated Val-AMP. The other activity is designated 'posttransfer' editing and involves deacylation of mischarged Val-tRNA(Ile). This Clostridium acetobutylicum (strain ATCC 824 / DSM 792 / JCM 1419 / IAM 19013 / LMG 5710 / NBRC 13948 / NRRL B-527 / VKM B-1787 / 2291 / W) protein is Isoleucine--tRNA ligase.